A 101-amino-acid chain; its full sequence is Trp operon repressor homolog (101 aa).

Residues 59–82 (QREIQQNLSTSAATITRGSNMLKM) mediate DNA binding.

Belongs to the TrpR family. As to quaternary structure, homodimer.

The protein localises to the cytoplasm. Its function is as follows. This protein is an aporepressor. When complexed with L-tryptophan it binds the operator region of the trp operon and prevents the initiation of transcription. This Actinobacillus succinogenes (strain ATCC 55618 / DSM 22257 / CCUG 43843 / 130Z) protein is Trp operon repressor homolog.